Reading from the N-terminus, the 786-residue chain is Zinc finger transcription factor YRM1 (786 aa).

The segment at 1-25 (MSKRGSLQDRASPSEETVKKAQKRR) is disordered. The zn(2)-C6 fungal-type DNA-binding region spans 31–59 (CAFCRKRKLRCDQQKPMCSTCKTRGRSGC). A disordered region spans residues 721 to 747 (PLAGNSPGLPPEEVRNNSENASHNNET). Over residues 737 to 747 (NSENASHNNET) the composition is skewed to polar residues.

The protein localises to the cytoplasm. It is found in the nucleus. Transcription factor involved in the regulation of multidrug resistance genes. Acts in concert with YRR1. This Saccharomyces cerevisiae (strain ATCC 204508 / S288c) (Baker's yeast) protein is Zinc finger transcription factor YRM1 (YRM1).